Consider the following 457-residue polypeptide: Cysteine--tRNA ligase (457 aa).

Cys-27 is a binding site for Zn(2+). The 'HIGH' region signature appears at 29–39; that stretch reads ITPQSEPHIGH. Residues Cys-207, His-232, and Glu-236 each coordinate Zn(2+). The 'KMSKS' region motif lies at 265-269; it reads KMSKS. Residue Lys-268 participates in ATP binding.

It belongs to the class-I aminoacyl-tRNA synthetase family. In terms of assembly, monomer. It depends on Zn(2+) as a cofactor.

The protein localises to the cytoplasm. It carries out the reaction tRNA(Cys) + L-cysteine + ATP = L-cysteinyl-tRNA(Cys) + AMP + diphosphate. This is Cysteine--tRNA ligase from Dehalococcoides mccartyi (strain ATCC BAA-2100 / JCM 16839 / KCTC 5957 / BAV1).